A 96-amino-acid chain; its full sequence is Small ribosomal subunit protein uS15 (96 aa).

The protein belongs to the universal ribosomal protein uS15 family. In terms of assembly, part of the 30S ribosomal subunit. Forms a bridge to the 50S subunit in the 70S ribosome, contacting the 23S rRNA.

One of the primary rRNA binding proteins, it binds directly to 16S rRNA where it helps nucleate assembly of the platform of the 30S subunit by binding and bridging several RNA helices of the 16S rRNA. Functionally, forms an intersubunit bridge (bridge B4) with the 23S rRNA of the 50S subunit in the ribosome. The chain is Small ribosomal subunit protein uS15 from Streptomyces griseus subsp. griseus (strain JCM 4626 / CBS 651.72 / NBRC 13350 / KCC S-0626 / ISP 5235).